A 258-amino-acid chain; its full sequence is Adenylate kinase (258 aa).

Glycine 52–threonine 57 contacts ATP. The segment at alanine 72–valine 101 is NMP. Residues threonine 73, arginine 78, glycine 99–valine 101, glycine 128–arginine 131, and glutamine 135 each bind AMP. The tract at residues glycine 169–aspartate 206 is LID. ATP contacts are provided by residues arginine 170 and serine 179 to tyrosine 180. The AMP site is built by arginine 203 and arginine 214. Residue glutamine 242 coordinates ATP.

This sequence belongs to the adenylate kinase family. AK2 subfamily. Monomer.

Its subcellular location is the cytoplasm. The protein localises to the cytosol. The protein resides in the mitochondrion intermembrane space. The enzyme catalyses AMP + ATP = 2 ADP. Its function is as follows. Catalyzes the reversible transfer of the terminal phosphate group between ATP and AMP. Plays an important role in cellular energy homeostasis and in adenine nucleotide metabolism. Adenylate kinase activity is critical for regulation of the phosphate utilization and the AMP de novo biosynthesis pathways. This is Adenylate kinase (adk1) from Aspergillus oryzae (strain ATCC 42149 / RIB 40) (Yellow koji mold).